Here is a 338-residue protein sequence, read N- to C-terminus: Formamidase (338 aa).

One can recognise a CN hydrolase domain in the interval 14 to 260 (LLIAAIQYPV…WEIVTAELFP (247 aa)). E60 functions as the Proton acceptor in the catalytic mechanism. Residue K133 is the Proton donor of the active site. Catalysis depends on C166, which acts as the Nucleophile.

This sequence belongs to the carbon-nitrogen hydrolase superfamily. Aliphatic amidase family.

The enzyme catalyses formamide + H2O = formate + NH4(+). In terms of biological role, is an aliphatic amidase with a restricted substrate specificity, as it only hydrolyzes formamide. In Photorhabdus laumondii subsp. laumondii (strain DSM 15139 / CIP 105565 / TT01) (Photorhabdus luminescens subsp. laumondii), this protein is Formamidase.